Here is an 866-residue protein sequence, read N- to C-terminus: Potassium voltage-gated channel subfamily KQT member 3 (866 aa).

The tract at residues Met-1–Lys-42 is disordered. The Cytoplasmic segment spans residues Met-1–Gly-120. Residues Ala-11–Ala-25 are compositionally biased toward gly residues. A compositionally biased stretch (low complexity) spans Ala-26 to Ala-36. Thr-81 is modified (phosphothreonine). The helical transmembrane segment at Trp-121–Thr-143 threads the bilayer. At Thr-144–Gly-153 the chain is on the extracellular side. The chain crosses the membrane as a helical span at residues Asp-154–Ile-175. Residues Trp-176 to Phe-193 lie on the Cytoplasmic side of the membrane. A helical membrane pass occupies residues Ala-194 to Val-213. Topologically, residues Ala-214–Ser-225 are extracellular. A helical; Voltage-sensor transmembrane segment spans residues Leu-226 to Gly-244. Arg-243 is a binding site for a 1,2-diacyl-sn-glycero-3-phospho-(1D-myo-inositol-4,5-bisphosphate). The Cytoplasmic portion of the chain corresponds to Gly-245–Ala-256. Residues His-257–Val-282 traverse the membrane as a helical segment. Lys-259 contributes to the a 1,2-diacyl-sn-glycero-3-phospho-(1D-myo-inositol-4,5-bisphosphate) binding site. At Glu-283–Thr-302 the chain is on the extracellular side. The pore-forming intramembrane region spans Tyr-303–Ala-315. Residues Thr-316–Asp-321 carry the Selectivity filter motif. Over Thr-316 to Thr-326 the chain is Extracellular. Residues Trp-327–Ser-353 form a helical membrane-spanning segment. Over Gly-354–Thr-866 the chain is Cytoplasmic. The segment at Ala-356 to Thr-537 is mediates interaction with calmodulin. Lys-366 provides a ligand contact to a 1,2-diacyl-sn-glycero-3-phospho-(1D-myo-inositol-4,5-bisphosphate). 3 disordered regions span residues Pro-574–Ser-617, Gly-656–Arg-676, and Gln-757–Thr-866. Over residues Glu-837–Thr-866 the composition is skewed to polar residues.

This sequence belongs to the potassium channel family. KQT (TC 1.A.1.15) subfamily. Kv7.3/KCNQ3 sub-subfamily. In terms of assembly, heterotetramer with KCNQ2; forms heterotetrameric native M-channel responsible for the M-current. Interacts with calmodulin; the interaction is calcium-independent, constitutive and participates in the proper assembly of a functional M-channel. Heteromultimer with KCNQ5. May associate with KCNE2. Interacts with IQCJ-SCHIP1. Interacts (via the pore module) with SLC5A3/SMIT1; forms a coregulatory complex that alters ion selectivity, voltage dependence and gating kinetics of the channel. Post-translationally, KCNQ2/KCNQ3 are ubiquitinated by NEDD4L. Ubiquitination leads to protein degradation. Degradation induced by NEDD4L is inhibited by USP36.

It is found in the cell membrane. The enzyme catalyses K(+)(in) = K(+)(out). It carries out the reaction Rb(+)(in) = Rb(+)(out). The catalysed reaction is Cs(+)(in) = Cs(+)(out). It catalyses the reaction Na(+)(in) = Na(+)(out). With respect to regulation, phosphatidylinositol-4,5-bisphosphate (PIP2) potentiates the activation of KCNQ channels by enhancing the electro-mechanical coupling of the voltage-sensing domain (VSD) and the pore-forming domain (PD). In the closed state of the channel, PIP2 is anchored at the S2-S3 loop; upon channel activation, PIP2 interacts with the S4-S5 linker and is involved in channel gating. Calcium suppresses KCNQ2-KCNQ3 channel currents, with calcium-bound calmodulin inducing a change in channel configuration which leads to the reduction of channel affinity for PIP2 and subsequent current suppression. Functionally, pore-forming subunit of the voltage-gated potassium (Kv) M-channel which is responsible for the M-current, a key controller of neuronal excitability. M-channel is composed of pore-forming subunits KCNQ2 and KCNQ3 assembled as heterotetramers. The native M-current has a slowly activating and deactivating potassium conductance which plays a critical role in determining the subthreshold electrical excitability of neurons as well as the responsiveness to synaptic inputs. M-channel is selectively permeable in vitro to other cations besides potassium, in decreasing order of affinity K(+) &gt; Rb(+) &gt; Cs(+) &gt; Na(+). M-channel association with SLC5A3/SMIT1 alters channel ion selectivity, increasing Na(+) and Cs(+) permeation relative to K(+). Suppressed by activation of M1 muscarinic acetylcholine receptors. KCNQ3 also associates with KCNQ5 to form a functional channel in vitro and may also contribute to the M-current in brain. The polypeptide is Potassium voltage-gated channel subfamily KQT member 3 (Bos taurus (Bovine)).